A 370-amino-acid polypeptide reads, in one-letter code: MTVDAVRVELGARAYEVRIGPGLIARAGAEIAPLLRRPKLAILTDETVAGLHLAPFQAALAEAGIASSALALPAGEATKGWEQFSRAVEWLLEEKVERRDVVVALGGGVIGDLAGFAAAVLRRGVRFVQVPTTLLAQVDSSVGGKTGINTAQGKNLVGAFHQPSLVLADIGVLESLPARDFLAGYGEVVKYGLLGDADFFEWLEGAAPRLASDPEARQRAVRRSVEMKAEIVARDETEEGDRALLNLGHTFCHALEKATGYSDRLLHGEGVAIGCALAFELSQHMGLCPQEAPSRLRAHLRAMGMKVDLRDIPGDLPDAEGLLRLMAQDKKVVDGKLRFILARDIGAAFVAKDVPGDLVRRILQEALATR.

NAD(+) contacts are provided by residues 108–112 (GVIGD), 132–133 (TT), lysine 145, and lysine 154. Positions 187, 249, and 267 each coordinate Zn(2+).

Belongs to the sugar phosphate cyclases superfamily. Dehydroquinate synthase family. It depends on Co(2+) as a cofactor. The cofactor is Zn(2+). Requires NAD(+) as cofactor.

It is found in the cytoplasm. It carries out the reaction 7-phospho-2-dehydro-3-deoxy-D-arabino-heptonate = 3-dehydroquinate + phosphate. It functions in the pathway metabolic intermediate biosynthesis; chorismate biosynthesis; chorismate from D-erythrose 4-phosphate and phosphoenolpyruvate: step 2/7. In terms of biological role, catalyzes the conversion of 3-deoxy-D-arabino-heptulosonate 7-phosphate (DAHP) to dehydroquinate (DHQ). The sequence is that of 3-dehydroquinate synthase from Cereibacter sphaeroides (strain ATCC 17025 / ATH 2.4.3) (Rhodobacter sphaeroides).